A 429-amino-acid chain; its full sequence is Argininosuccinate lyase (429 aa).

Belongs to the lyase 1 family. Argininosuccinate lyase subfamily.

Its subcellular location is the cytoplasm. It catalyses the reaction 2-(N(omega)-L-arginino)succinate = fumarate + L-arginine. The protein operates within amino-acid biosynthesis; L-arginine biosynthesis; L-arginine from L-ornithine and carbamoyl phosphate: step 3/3. In Pyrobaculum calidifontis (strain DSM 21063 / JCM 11548 / VA1), this protein is Argininosuccinate lyase.